Reading from the N-terminus, the 320-residue chain is Cytochrome f (320 aa).

The N-terminal stretch at 1 to 35 (MENRKTFSWLKEQMIRSISVSIMIYVITRTSISNA) is a signal peptide. Y36, C56, C59, and H60 together coordinate heme. Residues 286–306 (VQGLLFFFASVILAQVFLVLK) form a helical membrane-spanning segment.

It belongs to the cytochrome f family. As to quaternary structure, the 4 large subunits of the cytochrome b6-f complex are cytochrome b6, subunit IV (17 kDa polypeptide, petD), cytochrome f and the Rieske protein, while the 4 small subunits are PetG, PetL, PetM and PetN. The complex functions as a dimer. It depends on heme as a cofactor.

The protein localises to the plastid. Its subcellular location is the chloroplast thylakoid membrane. Its function is as follows. Component of the cytochrome b6-f complex, which mediates electron transfer between photosystem II (PSII) and photosystem I (PSI), cyclic electron flow around PSI, and state transitions. The protein is Cytochrome f of Saccharum hybrid (Sugarcane).